Reading from the N-terminus, the 389-residue chain is Chalcone synthase J (389 aa).

Residue cysteine 164 is part of the active site.

It belongs to the thiolase-like superfamily. Chalcone/stilbene synthases family.

It carries out the reaction (E)-4-coumaroyl-CoA + 3 malonyl-CoA + 3 H(+) = 2',4,4',6'-tetrahydroxychalcone + 3 CO2 + 4 CoA. It participates in secondary metabolite biosynthesis; flavonoid biosynthesis. In terms of biological role, the primary product of this enzyme is 4,2',4',6'-tetrahydroxychalcone (also termed naringenin-chalcone or chalcone) which can under specific conditions spontaneously isomerize into naringenin. The polypeptide is Chalcone synthase J (CHSJ) (Petunia hybrida (Petunia)).